The following is a 339-amino-acid chain: Dihydroorotase (339 aa).

Zn(2+)-binding residues include His-12 and His-14. Residues 14-16 (HVR) and Asn-40 contribute to the substrate site. Zn(2+) is bound by residues Lys-94, His-133, His-167, and Asp-239. Lys-94 is modified (N6-carboxylysine). His-133 serves as a coordination point for substrate. Asp-239 is an active-site residue. The substrate site is built by His-243 and Ala-255.

It belongs to the metallo-dependent hydrolases superfamily. DHOase family. Class II DHOase subfamily. Homodimer. Requires Zn(2+) as cofactor.

It carries out the reaction (S)-dihydroorotate + H2O = N-carbamoyl-L-aspartate + H(+). The protein operates within pyrimidine metabolism; UMP biosynthesis via de novo pathway; (S)-dihydroorotate from bicarbonate: step 3/3. Its function is as follows. Catalyzes the reversible cyclization of carbamoyl aspartate to dihydroorotate. The chain is Dihydroorotase from Helicobacter pylori (strain G27).